Here is a 111-residue protein sequence, read N- to C-terminus: Distal membrane-arm assembly complex protein 1 (111 aa).

Positions 1-11 (MGSSFSGSTEF) are enriched in polar residues. Positions 1 to 40 (MGSSFSGSTEFSAPAPPTVSTAVPANPPAKSAVPASPARD) are disordered. The span at 18-38 (TVSTAVPANPPAKSAVPASPA) shows a compositional bias: low complexity. Helical transmembrane passes span 51 to 68 (VLSG…YLVA) and 81 to 101 (GTVL…VVLV).

As to quaternary structure, interacts with incompletely assembled mitochondrial NADH:ubiquinone oxidoreductase complex (complex I).

It localises to the mitochondrion inner membrane. Required for the assembly of the mitochondrial NADH:ubiquinone oxidoreductase complex (complex I). Involved in the assembly of the distal region of complex I. The sequence is that of Distal membrane-arm assembly complex protein 1 from Mus musculus (Mouse).